The following is a 353-amino-acid chain: MTARLRPELAGLPVYVPGKTVPGAIKLASNETVFGPLPSVRAAIDRATDTVNRYPDNGCVQLKAALARHLGPDFAPEHVAVGCGSVSLCQQLVQVTASVGDEVVFGWRSFELYPPQVRVAGAIPIQVPLTDHTFDLYAMLAAVTDRTRLIFVCNPNNPTSTVVGPDALARFVEAVPAHILIAIDEAYVEYIRDGMRPDSLGLVRAHNNVVVLRTFSKAYGLAGLRIGYAIGHPDVITALDKVYVPFTVSSIGQAAAIASLDAADELLARTDTVVAERARVSAELRAAGFTLPPSQANFVWLPLGSRTQDFVEQAADARIVVRPYGTDGVRVTVAAPEENDAFLRFARRWRSDQ.

Lysine 217 bears the N6-(pyridoxal phosphate)lysine mark.

This sequence belongs to the class-II pyridoxal-phosphate-dependent aminotransferase family. As to quaternary structure, homodimer. Requires pyridoxal 5'-phosphate as cofactor.

It carries out the reaction an aromatic L-alpha-amino acid + 2-oxoglutarate = an aromatic oxo-acid + L-glutamate. Its function is as follows. Aminotransferase that catalyzes the conversion of aromatic amino acids and 2-oxoglutarate into corresponding aromatic oxo acids and L-glutamate. The protein is Aromatic amino acid aminotransferase of Mycobacterium bovis (strain ATCC BAA-935 / AF2122/97).